Reading from the N-terminus, the 533-residue chain is 2-isopropylmalate synthase (533 aa).

Positions 8 to 270 constitute a Pyruvate carboxyltransferase domain; it reads VIIFDTTLRD…YFNPFLGRPA (263 aa). Residues aspartate 17, histidine 209, histidine 211, and asparagine 245 each contribute to the Mn(2+) site. A regulatory domain region spans residues 409 to 533; it reads RLELVQVSCG…KEKTPEMLQV (125 aa).

The protein belongs to the alpha-IPM synthase/homocitrate synthase family. LeuA type 1 subfamily. In terms of assembly, homodimer. Requires Mn(2+) as cofactor.

The protein localises to the cytoplasm. The catalysed reaction is 3-methyl-2-oxobutanoate + acetyl-CoA + H2O = (2S)-2-isopropylmalate + CoA + H(+). Its pathway is amino-acid biosynthesis; L-leucine biosynthesis; L-leucine from 3-methyl-2-oxobutanoate: step 1/4. Its function is as follows. Catalyzes the condensation of the acetyl group of acetyl-CoA with 3-methyl-2-oxobutanoate (2-ketoisovalerate) to form 3-carboxy-3-hydroxy-4-methylpentanoate (2-isopropylmalate). This chain is 2-isopropylmalate synthase, found in Microcystis aeruginosa.